The sequence spans 155 residues: MPKKFYVSWDNLQREARRLARRQLPVSQWKGIIAVSRGGLVPAALMARELGIRNVETLCISSYDHNNQRDLVVVKAATTAGDGEGWLVVDDLVDTGGTAKAIRDLYPKAKFITIFAKPMGEPLVDDFEVAIPQDTWIEQPWDMALEFAHPICDEE.

5-phospho-alpha-D-ribose 1-diphosphate-binding positions include 37-38 (RG), Arg-69, and 90-98 (DDLVDTGGT). Arg-69 is a GMP binding site. Asp-91 contacts Mg(2+). The guanine site is built by Asp-94 and Ile-137. The xanthine site is built by Asp-94 and Ile-137. GMP contacts are provided by residues 94–98 (DTGGT) and 136–137 (WI).

Belongs to the purine/pyrimidine phosphoribosyltransferase family. XGPT subfamily. As to quaternary structure, homotetramer. It depends on Mg(2+) as a cofactor.

It is found in the cell inner membrane. It catalyses the reaction GMP + diphosphate = guanine + 5-phospho-alpha-D-ribose 1-diphosphate. The enzyme catalyses XMP + diphosphate = xanthine + 5-phospho-alpha-D-ribose 1-diphosphate. It carries out the reaction IMP + diphosphate = hypoxanthine + 5-phospho-alpha-D-ribose 1-diphosphate. It functions in the pathway purine metabolism; GMP biosynthesis via salvage pathway; GMP from guanine: step 1/1. It participates in purine metabolism; XMP biosynthesis via salvage pathway; XMP from xanthine: step 1/1. Its function is as follows. Purine salvage pathway enzyme that catalyzes the transfer of the ribosyl-5-phosphate group from 5-phospho-alpha-D-ribose 1-diphosphate (PRPP) to the N9 position of the 6-oxopurines guanine and xanthine to form the corresponding ribonucleotides GMP (guanosine 5'-monophosphate) and XMP (xanthosine 5'-monophosphate), with the release of PPi. To a lesser extent, also acts on hypoxanthine. The protein is Xanthine-guanine phosphoribosyltransferase of Aeromonas salmonicida (strain A449).